The following is a 353-amino-acid chain: 4-hydroxy-2-oxovalerate aldolase 2 (353 aa).

Positions 14–266 (VRMTDTSLRD…KTGIDFFDIA (253 aa)) constitute a Pyruvate carboxyltransferase domain. 22–23 (RD) is a binding site for substrate. A Mn(2+)-binding site is contributed by Asp23. His26 (proton acceptor) is an active-site residue. Substrate-binding residues include Ser176 and His205. 2 residues coordinate Mn(2+): His205 and His207. Residue Tyr296 coordinates substrate.

The protein belongs to the 4-hydroxy-2-oxovalerate aldolase family.

It carries out the reaction (S)-4-hydroxy-2-oxopentanoate = acetaldehyde + pyruvate. The chain is 4-hydroxy-2-oxovalerate aldolase 2 from Mycobacterium sp. (strain JLS).